Here is a 153-residue protein sequence, read N- to C-terminus: Insulin-like growth factor 1 (153 aa).

The interval 49–77 (GPETLCGAELVDALQFVCGDRGFYFNKPT) is b. Intrachain disulfides connect Cys54/Cys96, Cys66/Cys109, and Cys95/Cys100. Residues 78–89 (GYGSSSRRAPQT) are c. The a stretch occupies residues 90 to 110 (GIVDECCFRSCDLRRLEMYCA). A d region spans residues 111–118 (PLKPAKSA). Positions 119–153 (RSVRAQRHTDMPKAQKEVHLKNTSRGSSGNKNYRM) are cleaved as a propeptide — e peptide. Residues 120–153 (SVRAQRHTDMPKAQKEVHLKNTSRGSSGNKNYRM) are disordered. Over residues 125 to 138 (RHTDMPKAQKEVHL) the composition is skewed to basic and acidic residues. Residues 139-153 (KNTSRGSSGNKNYRM) show a composition bias toward polar residues.

It belongs to the insulin family. Forms a ternary complex with IGFR1 and ITGAV:ITGB3. Forms a ternary complex with IGFR1 and ITGA6:ITGB4. Forms a ternary complex with IGFBP3 and ALS.

Its subcellular location is the secreted. In terms of biological role, the insulin-like growth factors, isolated from plasma, are structurally and functionally related to insulin but have a much higher growth-promoting activity. May be a physiological regulator of [1-14C]-2-deoxy-D-glucose (2DG) transport and glycogen synthesis in osteoblasts. Stimulates glucose transport in bone-derived osteoblastic (PyMS) cells and is effective at much lower concentrations than insulin, not only regarding glycogen and DNA synthesis but also with regard to enhancing glucose uptake. May play a role in synapse maturation. Ca(2+)-dependent exocytosis of IGF1 is required for sensory perception of smell in the olfactory bulb. Acts as a ligand for IGF1R. Binds to the alpha subunit of IGF1R, leading to the activation of the intrinsic tyrosine kinase activity which autophosphorylates tyrosine residues in the beta subunit thus initiating a cascade of down-stream signaling events leading to activation of the PI3K-AKT/PKB and the Ras-MAPK pathways. Binds to integrins ITGAV:ITGB3 and ITGA6:ITGB4. Its binding to integrins and subsequent ternary complex formation with integrins and IGFR1 are essential for IGF1 signaling. Induces the phosphorylation and activation of IGFR1, MAPK3/ERK1, MAPK1/ERK2 and AKT1. As part of the MAPK/ERK signaling pathway, acts as a negative regulator of apoptosis in cardiomyocytes via promotion of STUB1/CHIP-mediated ubiquitination and degradation of ICER-type isoforms of CREM. This chain is Insulin-like growth factor 1, found in Sus scrofa (Pig).